A 184-amino-acid chain; its full sequence is Dual-action ribosomal maturation protein DarP (184 aa).

A disordered region spans residues 1–21 (MYKHPDEEWLDEIPGQQENED).

It belongs to the DarP family.

The protein localises to the cytoplasm. Member of a network of 50S ribosomal subunit biogenesis factors which assembles along the 30S-50S interface, preventing incorrect 23S rRNA structures from forming. Promotes peptidyl transferase center (PTC) maturation. This chain is Dual-action ribosomal maturation protein DarP, found in Edwardsiella ictaluri (strain 93-146).